Consider the following 115-residue polypeptide: Probable 4-amino-4-deoxy-L-arabinose-phosphoundecaprenol flippase subunit ArnE (115 aa).

Transmembrane regions (helical) follow at residues 1–21, 43–63, 65–85, and 93–113; these read MIVGYLLVVLVSLLTCGGQLC, WLALAVLLLGLGMAVWLNVLQ, LPLSLAYPTLSLNFVLVTLAA, and TTARHWYGVASIMLGILLMSI. The EamA domain occupies 44 to 113; that stretch reads LALAVLLLGL…IMLGILLMSI (70 aa).

It belongs to the ArnE family. As to quaternary structure, heterodimer of ArnE and ArnF.

It is found in the cell inner membrane. It participates in bacterial outer membrane biogenesis; lipopolysaccharide biosynthesis. Its function is as follows. Translocates 4-amino-4-deoxy-L-arabinose-phosphoundecaprenol (alpha-L-Ara4N-phosphoundecaprenol) from the cytoplasmic to the periplasmic side of the inner membrane. The sequence is that of Probable 4-amino-4-deoxy-L-arabinose-phosphoundecaprenol flippase subunit ArnE from Serratia proteamaculans (strain 568).